The primary structure comprises 116 residues: Distal membrane-arm assembly complex protein 1 (116 aa).

Residues 1-39 (MGSRLSQPFESYITAPPGTAAAPAKPAPPATPGAPTSPA) form a disordered region. Low complexity predominate over residues 14-24 (TAPPGTAAAPA). Transmembrane regions (helical) follow at residues 52 to 69 (VLSGLGLMGAGGYVYWVA) and 82 to 104 (WTITQMVIGLSENQGIATWGIVV).

As to quaternary structure, interacts with incompletely assembled mitochondrial NADH:ubiquinone oxidoreductase complex (complex I).

The protein localises to the mitochondrion inner membrane. Required for the assembly of the mitochondrial NADH:ubiquinone oxidoreductase complex (complex I). Involved in the assembly of the distal region of complex I. This is Distal membrane-arm assembly complex protein 1 from Homo sapiens (Human).